We begin with the raw amino-acid sequence, 834 residues long: MSASRSRNKQSKLCDDERLDISRDEFNRFQEAFGKEEFRKLFFDYVDEIQDPENRKIYESEITQLEKERGVEVRFIHPKPGFVIKTALDGELKCFINIASCEEIQRPKNEVATDPSSGSRGLSWSIPMAQTTSRDDFDAKNNHCKVFDVVFHPDALHLAMRNKQFRQCLIDTALDAIEREYKVSLDRANLKFPKLDYKGIPRPTVIRKMADNPTAEEQEPHPLAHMFPTKPPAPGKQEPRVLPMKTKPSPVPEFTVPRYTIKHSHDVDLSEYTDELDAKLHVTVPRSLVVEIELPLLRSTAECQLDVTSKSIYLFSERQGAKYRLKLDLPFIVDDKAGRARFDTDMRRLSITLPVVRKSIQEQAQMHETLRHFSREDSGVELHSNSESPVEEDPDGELSDSKADISETSSPSVAPANSPFLKSSVHYQLPSKFDCNVLDNVMAFVLHVPNVQPDSIEQLREQRSLHLKFATIGSGYYPTHYAFYVELSAEHEDSSIESAEAEAWDNNVVLKLCLNSQSETPASYLAGLDATELKEYPVHGQYHVKSKGKVNAKKDNAPLDVKFERNQEGHALKVTIRPGTKEEEEDKENQDQEPESDQQQQQQVQNKKPGKKQRKKNKKERSLSESACADMILQEPLAKTNELQPRATFKLPPQRKQRSYSECNDSTGRSHRGILKRFSRYGPRPSMSDSWSSIDDSSSYSCSVDASGTSLFSQSFGGIPEEDRSDAGLSESCKKTVRFNDHIMKQVFRLDSSILGQRKKNQKRRDLKLRAQQRRLSEGDSVDYEETRGSALKQEENPSRNCNDSGLDLTGAAGAHSNNNESDAKNTMMFEMDD.

Disordered regions lie at residues T214–P239, S374–P415, K547–R669, and K759–D834. Position 378 is a phosphoserine (S378). Residues P389–L398 are compositionally biased toward acidic residues. Residues A552–A571 are compositionally biased toward basic and acidic residues. The segment covering E582 to S596 has biased composition (acidic residues). Over residues D597–K607 the composition is skewed to low complexity. 2 stretches are compositionally biased toward basic residues: residues K608–K619 and K759–Q773. S777 is modified (phosphoserine). Positions E785–P798 are enriched in basic and acidic residues.

This sequence belongs to the PIH1 family. Kintoun subfamily. In terms of assembly, interacts with Pp1alpha-96A, Pp1-87B, Pp1-13C and flw.

It is found in the cytoplasm. Functionally, required for cytoplasmic pre-assembly of axonemal dyneins, thereby playing a central role in motility in cilia and flagella. Involved in pre-assembly of dynein arm complexes in the cytoplasm before intraflagellar transport loads them for the ciliary compartment. This Drosophila melanogaster (Fruit fly) protein is Protein kintoun.